The following is a 221-amino-acid chain: Beta-phosphoglucomutase (221 aa).

Catalysis depends on aspartate 8, which acts as the Nucleophile. 2 residues coordinate Mg(2+): aspartate 8 and aspartate 10. Residue aspartate 8 is modified to 4-aspartylphosphate. The Proton donor/acceptor role is filled by aspartate 10. The beta-D-glucose 6-phosphate site is built by aspartate 10, glycine 46, valine 47, arginine 49, serine 116, lysine 117, and asparagine 118. Aspartate 170 contacts Mg(2+).

Belongs to the HAD-like hydrolase superfamily. CbbY/CbbZ/Gph/YieH family. In terms of assembly, monomer. Mg(2+) serves as cofactor. Post-translationally, autophosphorylated.

Its subcellular location is the cytoplasm. The enzyme catalyses beta-D-glucose 1-phosphate = beta-D-glucose 6-phosphate. Activated by phosphorylation. Competitively inhibited by alpha-D-galactose-1-phosphate. Catalyzes the interconversion of D-glucose 1-phosphate (G1P) and D-glucose 6-phosphate (G6P), forming beta-D-glucose 1,6-(bis)phosphate (beta-G16P) as an intermediate. The beta-phosphoglucomutase (Beta-PGM) acts on the beta-C(1) anomer of G1P. Glucose or lactose are used in preference to maltose, which is only utilized after glucose or lactose has been exhausted. It plays a key role in the regulation of the flow of carbohydrate intermediates in glycolysis and the formation of the sugar nucleotide UDP-glucose. In Lactococcus lactis subsp. lactis (strain IL1403) (Streptococcus lactis), this protein is Beta-phosphoglucomutase.